The following is a 153-amino-acid chain: MRCPACHHNGTRVLDSRPAHEGRSIRRRRECESCNHRFTTFEMIEEVPLIVVKKDGTRQEFSSDKILRGLIRACEKRPVPLETLEGIVNEVERELRGQGKNEVDSKEIGELVMERLANVDDVAYVRFASVYRQFKDINVFIQELKELMERDDR.

The segment at 1–22 (MRCPACHHNGTRVLDSRPAHEG) is disordered. A zinc finger lies at 3 to 34 (CPACHHNGTRVLDSRPAHEGRSIRRRRECESC). The ATP-cone domain maps to 49–139 (LIVVKKDGTR…VYRQFKDINV (91 aa)).

The protein belongs to the NrdR family. Zn(2+) is required as a cofactor.

Its function is as follows. Negatively regulates transcription of bacterial ribonucleotide reductase nrd genes and operons by binding to NrdR-boxes. The sequence is that of Transcriptional repressor NrdR from Halalkalibacterium halodurans (strain ATCC BAA-125 / DSM 18197 / FERM 7344 / JCM 9153 / C-125) (Bacillus halodurans).